A 465-amino-acid polypeptide reads, in one-letter code: Cysteine--tRNA ligase (465 aa).

Cys29 is a Zn(2+) binding site. The 'HIGH' region signature appears at 31–41 (PTVYNYIHIGN). Cys209, His234, and Glu238 together coordinate Zn(2+). The short motif at 266-270 (KMSKS) is the 'KMSKS' region element. ATP is bound at residue Lys269. Ser270 carries the post-translational modification Phosphoserine.

The protein belongs to the class-I aminoacyl-tRNA synthetase family. As to quaternary structure, monomer. Requires Zn(2+) as cofactor.

The protein resides in the cytoplasm. The enzyme catalyses tRNA(Cys) + L-cysteine + ATP = L-cysteinyl-tRNA(Cys) + AMP + diphosphate. This Bacillus anthracis (strain A0248) protein is Cysteine--tRNA ligase.